Reading from the N-terminus, the 444-residue chain is Deoxyguanosinetriphosphate triphosphohydrolase-like protein (444 aa).

A disordered region spans residues 1–26; sequence MTESLWHERRLTEEKKRRNDHRSPYQ. The region spanning 59-250 is the HD domain; that stretch reads RLTHSLEVSQ…MELADDIAYA (192 aa).

Belongs to the dGTPase family. Type 2 subfamily.

The polypeptide is Deoxyguanosinetriphosphate triphosphohydrolase-like protein (Shewanella sediminis (strain HAW-EB3)).